The primary structure comprises 254 residues: U3 small nucleolar RNA-associated protein NOL7 (254 aa).

The segment at M1–L90 is disordered. Composition is skewed to acidic residues over residues M18–A31 and P48–E61. Residues E71–L90 are compositionally biased toward basic and acidic residues. K127 is covalently cross-linked (Glycyl lysine isopeptide (Lys-Gly) (interchain with G-Cter in SUMO2)). S129 is modified (phosphoserine). A Glycyl lysine isopeptide (Lys-Gly) (interchain with G-Cter in SUMO2) cross-link involves residue K157. Positions N235 to K254 are disordered.

It belongs to the UTP16 family. Part of the small subunit (SSU) processome, composed of more than 70 proteins and the RNA chaperone small nucleolar RNA (snoRNA) U3.

The protein resides in the nucleus. The protein localises to the nucleolus. Functions as part of the small subunit (SSU) processome, first precursor of the small eukaryotic ribosomal subunit that coordinates the first two steps of ribosome biogenesis in transcription of the primary transcript pre-RNA and pre-18S processing. During the assembly of the SSU processome in the nucleolus, many ribosome biogenesis factors, an RNA chaperone and ribosomal proteins associate with the nascent pre-rRNA and work in concert to generate RNA folding, modifications, rearrangements and cleavage as well as targeted degradation of pre-ribosomal RNA by the RNA exosome. This subunit is required for processing of the 5'-external transcribed spacer sequence (5'ETS) of the primary transcript pre-rRNA to yield the 18S rRNA. Also plays a role in maintaining early pre-rRNA levels, either by assisting in its transcription or stability. The sequence is that of U3 small nucleolar RNA-associated protein NOL7 (Nol7) from Mus musculus (Mouse).